The primary structure comprises 511 residues: U3 snoRNP-associated protein-like YAOH (511 aa).

Basic residues predominate over residues 1–18 (MAPRPRKRVSRPKPRATS). The interval 1-117 (MAPRPRKRVS…EDEDEGEEAG (117 aa)) is disordered. 2 stretches are compositionally biased toward acidic residues: residues 44-53 (EDIESEDSDL) and 66-80 (DDGE…EQET). Over residues 81–105 (AGEKKMRIAKELLKKVTDAARRRRE) the composition is skewed to basic and acidic residues. WD repeat units lie at residues 158–197 (KHRQ…SEKY), 217–256 (KRSK…HIQA), 259–298 (GHRG…YMNC), 301–339 (GHQN…QLLF), 342–380 (PATA…PTHI), 412–451 (SAQS…KGIR), and 457–497 (RLDG…QNGV).

It belongs to the WD repeat RRP9 family.

It localises to the nucleus. It is found in the nucleolus. Functionally, component of a nucleolar small nuclear ribonucleoprotein particle (snoRNP) thought to participate in the processing and modification of pre-ribosomal RNA. Essential for embryogenesis. This chain is U3 snoRNP-associated protein-like YAOH, found in Oryza sativa subsp. japonica (Rice).